The following is a 79-amino-acid chain: Methionine-rich peptide X (79 aa).

A signal peptide spans 1–22; that stretch reads MKKLAAVMLTSCLMVAVGASFA. Positions 37–79 are disordered; sequence KKDDMAKDEMKKDSMAKDGMKKDAMKKDAMMKKDGMTKDEMKK.

Post-translationally, protein is oxidized (possibly on Met residues) when cells are exposed to chlorite or hypochlorite; initially the protein is highly oxidized, by 50 minutes all protein is in the reduced form.

It localises to the periplasm. Functionally, serves as an oxidative stress sink, specifically for chlorite and hypochlorite. This is Methionine-rich peptide X from Azospira oryzae (strain ATCC BAA-33 / DSM 13638 / PS) (Dechlorosoma suillum).